A 793-amino-acid chain; its full sequence is Peroxidase-like protein (793 aa).

The first 20 residues, 1–20 (MNLFICHVFLLLLHGYLIIC), serve as a signal peptide directing secretion.

It belongs to the peroxidase family. Prismatic layer of shell (at protein level). Expressed primarily in the mantle with highest level in the mantle edge and lower level in the mantle pallium.

The protein localises to the secreted. The sequence is that of Peroxidase-like protein from Margaritifera margaritifera (Freshwater pearl mussel).